We begin with the raw amino-acid sequence, 118 residues long: Ly-6/neurotoxin-like protein 1 (118 aa).

Positions 1–22 (MTPLLTLFLVVLMGLPLAPVQA) are cleaved as a signal peptide. A UPAR/Ly6 domain is found at 23–107 (LDCHVCAYNG…LAIPATLALA (85 aa)). Disulfide bonds link C25/C48, C28/C35, C41/C66, C70/C87, and C88/C93. S95 carries the GPI-anchor amidated serine lipid modification. Residues 96–118 (AGLAIPATLALAPVLLATLWGLL) constitute a propeptide, removed in mature form.

In terms of assembly, interacts with nAChRs containing alpha-4:beta-2 (CHRNA4:CHRNB2) and alpha-7 (CHRNA7) subunits. Interacts with CHRNA4 probably in the endoplasmic reticulum prior to nAChR pentameric assembly. Interacts with KCNA2/Potassium voltage-gated channel subfamily A member 2. Expressed in lung predominantly in airway epithelial cells, submucous glands, and smooth muscle cells, in endothelial and smooth muscle cells in vessel walls and in alveolar type II cells (at protein level). Also expressed in brain.

It is found in the cell membrane. The protein localises to the cell projection. Its subcellular location is the dendrite. It localises to the endoplasmic reticulum. Its function is as follows. Acts in different tissues through interaction to nicotinic acetylcholine receptors (nAChRs). The proposed role as modulator of nAChR activity seems to be dependent on the nAChR subtype and stoichiometry, and to involve an effect on nAChR trafficking and its cell surface expression, and on single channel properties of the nAChR inserted in the plasma membrane. Modulates functional properties of nicotinic acetylcholine receptors (nAChRs) to prevent excessive excitation, and hence neurodegeneration. Enhances desensitization by increasing both the rate and extent of desensitization of alpha-4:beta-2-containing nAChRs and slowing recovery from desensitization. Promotes large amplitude ACh-evoked currents through alpha-4:beta-2 nAChRs. Is involved in regulation of the nAChR pentameric assembly in the endoplasmic reticulum. Shifts stoichiometry from high sensitivity alpha-4(2):beta-2(3) to low sensitivity alpha-4(3):beta-2(2) nAChR. In vitro modulates alpha-3:beta-4-containing nAChRs. Reduces cell surface expression of (alpha-3:beta-4)(2):beta-4 and (alpha-3:beta-4)(2):alpha-5 nAChRs suggesting an interaction with nAChR alpha-3(-):(+)beta-4 subunit interfaces and an allosteric mode. Corresponding single channel effects characterized by decreased unitary conductance, altered burst proportions and enhanced desensitization/inactivation seem to depend on nAChR alpha:alpha subunit interfaces and are greater in (alpha-3:beta-2)(2):alpha-3 when compared to (alpha-3:beta-2)(2):alpha-5 nAChRs. Prevents plasticity in the primary visual cortex late in life. The chain is Ly-6/neurotoxin-like protein 1 from Macaca mulatta (Rhesus macaque).